Consider the following 460-residue polypeptide: Keratin, type I cytoskeletal 27 (460 aa).

A head region spans residues 1–83 (MSVRFSSASR…GNEHGLLSGN (83 aa)). The tract at residues 84–119 (EKVTMQNLNDRLASYLDNVRALEEANADLEQKIKGW) is coil 1A. Positions 84–399 (EKVTMQNLND…RLIDGEDGSC (316 aa)) constitute an IF rod domain. Residues 120-141 (YEKFGPGSCRGLDHDYSRYFTV) form a linker 1 region. The tract at residues 142-233 (IDDLRNQIIS…KNHEEEMKAL (92 aa)) is coil 1B. Positions 234 to 256 (QCAAGGNVNVEMNAAPGVDLTVL) are linker 12. Residues 257–395 (LNNMRAEYEA…ETYCRLIDGE (139 aa)) form a coil 2 region. Residues 396–460 (DGSCTKSKGY…NMKSEQRVPS (65 aa)) are tail. The disordered stretch occupies residues 429–460 (DPRGKVPSSRVHTVEEKSTKVNNMKSEQRVPS). Over residues 448-460 (KVNNMKSEQRVPS) the composition is skewed to polar residues.

The protein belongs to the intermediate filament family. As to quaternary structure, heterotetramer of two type I and two type II keratins. Interacts with KRT6A to form filaments.

It is found in the cytoplasm. Functionally, essential for the proper assembly of type I and type II keratin protein complexes and formation of keratin intermediate filaments in the inner root sheath (irs). The chain is Keratin, type I cytoskeletal 27 from Capra hircus (Goat).